The sequence spans 443 residues: Tol-Pal system protein TolB (443 aa).

The signal sequence occupies residues 1–33; it reads MKIGIINTKIRTVFSAFACMIAASLVCTMPARA.

Belongs to the TolB family. As to quaternary structure, the Tol-Pal system is composed of five core proteins: the inner membrane proteins TolA, TolQ and TolR, the periplasmic protein TolB and the outer membrane protein Pal. They form a network linking the inner and outer membranes and the peptidoglycan layer.

It is found in the periplasm. Part of the Tol-Pal system, which plays a role in outer membrane invagination during cell division and is important for maintaining outer membrane integrity. This is Tol-Pal system protein TolB from Brucella ovis (strain ATCC 25840 / 63/290 / NCTC 10512).